The following is a 288-amino-acid chain: Elongation factor Ts (288 aa).

The segment at Thr-80 to Leu-83 is involved in Mg(2+) ion dislocation from EF-Tu.

This sequence belongs to the EF-Ts family.

It is found in the cytoplasm. In terms of biological role, associates with the EF-Tu.GDP complex and induces the exchange of GDP to GTP. It remains bound to the aminoacyl-tRNA.EF-Tu.GTP complex up to the GTP hydrolysis stage on the ribosome. This Pseudomonas fluorescens (strain ATCC BAA-477 / NRRL B-23932 / Pf-5) protein is Elongation factor Ts.